The sequence spans 210 residues: Urease accessory protein UreE (210 aa).

Residues 136-210 (PEGGAYAEPS…HGHSHAHDHK (75 aa)) form a disordered region. 2 stretches are compositionally biased toward basic and acidic residues: residues 145–169 (SHAHGDHDHDHHGHDHHGHDHTSHD) and 178–196 (HDHDHGHAHDDHVHDEHCG). Residues 197 to 210 (HDHHHGHSHAHDHK) are compositionally biased toward basic residues.

This sequence belongs to the UreE family.

The protein resides in the cytoplasm. Its function is as follows. Involved in urease metallocenter assembly. Binds nickel. Probably functions as a nickel donor during metallocenter assembly. The polypeptide is Urease accessory protein UreE (Bradyrhizobium sp. (strain ORS 278)).